We begin with the raw amino-acid sequence, 567 residues long: DNA-binding protein REPIN1 (567 aa).

Positions 17-52 are disordered; the sequence is PRLLSGPSQESPQTLGKESRGLRQQGTSVAQSGAQA. The span at 22–50 shows a compositional bias: polar residues; it reads GPSQESPQTLGKESRGLRQQGTSVAQSGA. Residue Ser-27 is modified to Phosphoserine. Thr-30 is subject to Phosphothreonine. Lys-33 carries the N6-acetyllysine modification. The segment at 57-79 adopts a C2H2-type 1; atypical zinc-finger fold; that stretch reads HRCAHCRRHFPGWVALWLHTRRC. 7 C2H2-type zinc fingers span residues 85–107, 116–138, 145–168, 177–199, 236–258, 264–286, and 292–314; these read LPCPECGRRFRHAPFLALHRQVH, FACHLCGQSFRGWVALVLHLRAH, IACPKCERRFWRRKQLRAHLRRCH, FICGNCGRSFAQWDQLVAHKRVH, FQCACCGKRFRHKPNLIAHRRVH, HQCPECGKRFTNKPYLTSHRRIH, and YPCKECGRRFRHKPNLLSHSKIH. Lys-276 is subject to N6-acetyllysine. Positions 305–315 are enriched in basic residues; sequence PNLLSHSKIHK. The tract at residues 305–372 is disordered; it reads PNLLSHSKIH…HPQDPIEAPP (68 aa). The span at 345–362 shows a compositional bias: pro residues; the sequence is PAVPLKPAQEPPPGAPPE. C2H2-type zinc fingers lie at residues 375–397, 403–425, 431–453, 459–481, 487–509, 515–537, and 543–565; these read YSCDDCGRSFRLERFLRAHQRQH, FTCAECGKNFGKKTHLVAHSRVH, FACEECGRRFSQGSHLAAHRRDH, FVCPDCGKAFRHKPYLAAHRRIH, YVCPDCGKAFSQKSNLVSHRRIH, YACPDCDRSFSQKSNLITHRKSH, and FCCAICGQTFDDEERLLAHQKKH.

Homodimers and homomultimers. Found in a complex with RIP60 and RIP100. Expressed in adipose tissue and bone tissue.

It localises to the nucleus. Its subcellular location is the cytoplasm. It is found in the cytosol. In terms of biological role, sequence-specific double-stranded DNA-binding protein. Binds ATT-rich and T-rich DNA sequences and facilitates DNA bending. May regulate the expression of genes involved in cellular fatty acid import, including SCARB1/CD36, and genes involved in lipid droplet formation. May regulate the expression of LCN2, and thereby influence iron metabolism and apoptosis-related pathways. May regulate the expression of genes involved in glucose transport. The protein is DNA-binding protein REPIN1 (REPIN1) of Homo sapiens (Human).